The primary structure comprises 114 residues: Probable gas vesicle protein J2 (114 aa).

A compositionally biased stretch (basic and acidic residues) spans 1–10; that stretch reads MTDLDHRYPG. The interval 1–21 is disordered; sequence MTDLDHRYPGEETEPYGPPSG.

The protein belongs to the gas vesicle GvpA family. In terms of assembly, interacts with GvpA.

The protein localises to the gas vesicle. A minor component of the gas vesicle, might be involved in nucleating gas vesicle formation. Gas vesicles (GV) are hollow, gas filled proteinaceous nanostructures. It is not clear what function GVs perform in soil bacteria. The protein is Probable gas vesicle protein J2 of Streptomyces coelicolor (strain ATCC BAA-471 / A3(2) / M145).